The following is a 120-amino-acid chain: ESAT-6-like protein EsxQ (120 aa).

This sequence belongs to the WXG100 family. ESAT-6 subfamily.

The protein localises to the secreted. The sequence is that of ESAT-6-like protein EsxQ from Mycobacterium bovis (strain ATCC BAA-935 / AF2122/97).